A 90-amino-acid polypeptide reads, in one-letter code: Probable Fe(2+)-trafficking protein (90 aa).

It belongs to the Fe(2+)-trafficking protein family. Monomer.

Could be a mediator in iron transactions between iron acquisition and iron-requiring processes, such as synthesis and/or repair of Fe-S clusters in biosynthetic enzymes. This is Probable Fe(2+)-trafficking protein from Serratia proteamaculans (strain 568).